Reading from the N-terminus, the 204-residue chain is Proteasome subunit beta type-3 (204 aa).

The protein belongs to the peptidase T1B family. As to quaternary structure, the 26S proteasome consists of a 20S proteasome core and two 19S regulatory subunits. The 20S proteasome core is composed of 28 subunits that are arranged in four stacked rings, resulting in a barrel-shaped structure. The two end rings are each formed by seven alpha subunits, and the two central rings are each formed by seven beta subunits. The catalytic chamber with the active sites is on the inside of the barrel.

Its subcellular location is the cytoplasm. The protein localises to the nucleus. Non-catalytic component of the proteasome, a multicatalytic proteinase complex which is characterized by its ability to cleave peptides with Arg, Phe, Tyr, Leu, and Glu adjacent to the leaving group at neutral or slightly basic pH. The proteasome has an ATP-dependent proteolytic activity. The protein is Proteasome subunit beta type-3 (pbs-3) of Caenorhabditis elegans.